The primary structure comprises 464 residues: Trigger factor (464 aa).

The 82-residue stretch at 162–243 folds into the PPIase FKBP-type domain; the sequence is GDFVSIDLSA…VKSVKERELP (82 aa). The interval 431-464 is disordered; the sequence is IDTSEFFGKRPSGDGAADEDADQADESTTADAGE. Over residues 446 to 455 the composition is skewed to acidic residues; that stretch reads AADEDADQAD.

This sequence belongs to the FKBP-type PPIase family. Tig subfamily.

The protein localises to the cytoplasm. The catalysed reaction is [protein]-peptidylproline (omega=180) = [protein]-peptidylproline (omega=0). In terms of biological role, involved in protein export. Acts as a chaperone by maintaining the newly synthesized protein in an open conformation. Functions as a peptidyl-prolyl cis-trans isomerase. The protein is Trigger factor of Mycobacterium avium (strain 104).